We begin with the raw amino-acid sequence, 349 residues long: tRNA N6-adenosine threonylcarbamoyltransferase (349 aa).

Fe cation contacts are provided by histidine 114 and histidine 118. Substrate contacts are provided by residues 136 to 140, aspartate 169, glycine 182, and asparagine 280; that span reads IMSGG. Residue aspartate 308 participates in Fe cation binding.

The protein belongs to the KAE1 / TsaD family. Fe(2+) serves as cofactor.

The protein resides in the cytoplasm. It catalyses the reaction L-threonylcarbamoyladenylate + adenosine(37) in tRNA = N(6)-L-threonylcarbamoyladenosine(37) in tRNA + AMP + H(+). In terms of biological role, required for the formation of a threonylcarbamoyl group on adenosine at position 37 (t(6)A37) in tRNAs that read codons beginning with adenine. Is involved in the transfer of the threonylcarbamoyl moiety of threonylcarbamoyl-AMP (TC-AMP) to the N6 group of A37, together with TsaE and TsaB. TsaD likely plays a direct catalytic role in this reaction. This is tRNA N6-adenosine threonylcarbamoyltransferase from Ehrlichia chaffeensis (strain ATCC CRL-10679 / Arkansas).